The sequence spans 225 residues: J-type co-chaperone jac1, mitochondrial (225 aa).

The N-terminal 49 residues, 1–49, are a transit peptide targeting the mitochondrion; that stretch reads MLKQAGNQSFRPFISFAQKSLFNRQITGNHWIFARFKFYPLNKIVNYNH. Residues 61–137 enclose the J domain; sequence NFYKQFEGDI…LTRAEYILQL (77 aa). Positions 98 to 100 match the HSP70 binding motif; sequence HPD.

It belongs to the HscB family. In terms of assembly, interacts with ssc1.

The protein resides in the mitochondrion matrix. Co-chaperone required for the assembly of iron-sulfur (Fe/S) clusters in mitochondria. Stimulates the ATPase activity of the mitochondrial Hsp70 chaperone ssc1, to mediate the transfer of iron-sulfur clusters from isu1 to grx5. This is J-type co-chaperone jac1, mitochondrial from Schizosaccharomyces pombe (strain 972 / ATCC 24843) (Fission yeast).